The chain runs to 411 residues: 2-oxoglutarate-dependent dioxygenase AOP3 (411 aa).

Residues 259–356 form the Fe2OG dioxygenase domain; that stretch reads GNASVGAKEA…RYAAALFSNP (98 aa). Fe cation contacts are provided by histidine 279, aspartate 281, and histidine 336. Arginine 347 provides a ligand contact to 2-oxoglutarate.

It belongs to the iron/ascorbate-dependent oxidoreductase family. Fe(2+) serves as cofactor. As to expression, not expressed.

Its function is as follows. 2-oxoglutarate-dependent dioxygenase involved in glucosinolates biosynthesis. Catalyzes the conversion of methylsulfinylalkyl glucosinolates to hydroxyalkyl glucosinolates. This chain is 2-oxoglutarate-dependent dioxygenase AOP3 (AOP3), found in Arabidopsis thaliana (Mouse-ear cress).